Here is a 387-residue protein sequence, read N- to C-terminus: Phosphoglycerate kinase (387 aa).

Substrate-binding positions include 21–23 (DLN), Arg-36, 59–62 (HLGR), Arg-113, and Arg-146. Residues Lys-197, Glu-314, and 340-343 (GGDT) contribute to the ATP site.

It belongs to the phosphoglycerate kinase family. In terms of assembly, monomer.

It localises to the cytoplasm. The enzyme catalyses (2R)-3-phosphoglycerate + ATP = (2R)-3-phospho-glyceroyl phosphate + ADP. Its pathway is carbohydrate degradation; glycolysis; pyruvate from D-glyceraldehyde 3-phosphate: step 2/5. This Pseudomonas putida (strain ATCC 700007 / DSM 6899 / JCM 31910 / BCRC 17059 / LMG 24140 / F1) protein is Phosphoglycerate kinase.